The following is a 578-amino-acid chain: Pentatricopeptide repeat-containing protein At4g22760 (578 aa).

PPR repeat units follow at residues 68–102, 103–137, 138–168, 169–203, 204–230, 231–261, 262–292, 293–327, 330–364, 365–395, 396–430, 431–465, and 466–496; these read DSFS…GIPP, SSHA…GLCG, CVYV…IAEK, NTVS…DAVS, WNLI…MPLK, SPAS…MPQK, NGVS…MSKK, DKLV…NSYI, DEIT…GIKI, DDLL…LNKK, DTVS…KIPP, NVVT…NLEP, and SADH…MPMQ. Positions 501-576 are type E motif; it reads VWGALLLASG…TLGCSWVEGS (76 aa).

This sequence belongs to the PPR family. PCMP-E subfamily.

In Arabidopsis thaliana (Mouse-ear cress), this protein is Pentatricopeptide repeat-containing protein At4g22760 (PCMP-E6).